Consider the following 161-residue polypeptide: Gamma-glutamylaminecyclotransferase A (161 aa).

26-29 is a substrate binding site; sequence YGTL. The Proton acceptor role is filled by Glu-101.

It belongs to the gamma-glutamylcyclotransferase family.

It catalyses the reaction epsilon-(gamma-L-glutamyl)-L-lysine = 5-oxo-L-proline + L-lysine. In terms of biological role, may contribute to degradation of proteins cross-linked by transglutaminases by degrading the cross-link between a lysine and a glutamic acid residue. Catalyzes the formation of 5-oxo-L-proline from L-gamma-glutamyl-L-epsilon-lysine. The sequence is that of Gamma-glutamylaminecyclotransferase A (ggact.1) from Danio rerio (Zebrafish).